A 185-amino-acid chain; its full sequence is uncharacterized protein (185 aa).

Component of the acid-insoluble and acid-soluble organic matrix of calcified layers of the shell (at protein level).

Its subcellular location is the secreted. This is an uncharacterized protein from Lottia gigantea (Giant owl limpet).